Consider the following 250-residue polypeptide: 3-deoxy-manno-octulosonate cytidylyltransferase (250 aa).

The protein belongs to the KdsB family.

It localises to the cytoplasm. It catalyses the reaction 3-deoxy-alpha-D-manno-oct-2-ulosonate + CTP = CMP-3-deoxy-beta-D-manno-octulosonate + diphosphate. The protein operates within nucleotide-sugar biosynthesis; CMP-3-deoxy-D-manno-octulosonate biosynthesis; CMP-3-deoxy-D-manno-octulosonate from 3-deoxy-D-manno-octulosonate and CTP: step 1/1. It participates in bacterial outer membrane biogenesis; lipopolysaccharide biosynthesis. In terms of biological role, activates KDO (a required 8-carbon sugar) for incorporation into bacterial lipopolysaccharide in Gram-negative bacteria. This is 3-deoxy-manno-octulosonate cytidylyltransferase from Pectobacterium atrosepticum (strain SCRI 1043 / ATCC BAA-672) (Erwinia carotovora subsp. atroseptica).